The primary structure comprises 194 residues: Phosphoheptose isomerase (194 aa).

One can recognise an SIS domain in the interval 34–188; the sequence is LANIFTKGKK…IEGVERIMFP (155 aa). Position 49 to 51 (49 to 51) interacts with substrate; it reads NGG. Residues H58 and E62 each coordinate Zn(2+). Residues E62, 90–91, 116–118, S121, and Q168 each bind substrate; these read ND and STS. 2 residues coordinate Zn(2+): Q168 and H176.

The protein belongs to the SIS family. GmhA subfamily. Zn(2+) serves as cofactor.

The protein resides in the cytoplasm. It carries out the reaction 2 D-sedoheptulose 7-phosphate = D-glycero-alpha-D-manno-heptose 7-phosphate + D-glycero-beta-D-manno-heptose 7-phosphate. It functions in the pathway carbohydrate biosynthesis; D-glycero-D-manno-heptose 7-phosphate biosynthesis; D-glycero-alpha-D-manno-heptose 7-phosphate and D-glycero-beta-D-manno-heptose 7-phosphate from sedoheptulose 7-phosphate: step 1/1. Catalyzes the isomerization of sedoheptulose 7-phosphate in D-glycero-D-manno-heptose 7-phosphate. This Fusobacterium nucleatum subsp. nucleatum (strain ATCC 25586 / DSM 15643 / BCRC 10681 / CIP 101130 / JCM 8532 / KCTC 2640 / LMG 13131 / VPI 4355) protein is Phosphoheptose isomerase.